The primary structure comprises 324 residues: tRNA(Ile)-lysidine synthase (324 aa).

33–38 (SGGPDS) is a binding site for ATP.

Belongs to the tRNA(Ile)-lysidine synthase family.

The protein localises to the cytoplasm. The catalysed reaction is cytidine(34) in tRNA(Ile2) + L-lysine + ATP = lysidine(34) in tRNA(Ile2) + AMP + diphosphate + H(+). In terms of biological role, ligates lysine onto the cytidine present at position 34 of the AUA codon-specific tRNA(Ile) that contains the anticodon CAU, in an ATP-dependent manner. Cytidine is converted to lysidine, thus changing the amino acid specificity of the tRNA from methionine to isoleucine. In Thermobifida fusca (strain YX), this protein is tRNA(Ile)-lysidine synthase.